The following is a 265-amino-acid chain: Tryptophan 2,3-dioxygenase (265 aa).

Residues phenylalanine 38–histidine 42 and arginine 104 contribute to the substrate site. Position 223 (histidine 223) interacts with heme. Substrate is bound at residue threonine 237.

This sequence belongs to the tryptophan 2,3-dioxygenase family. In terms of assembly, homotetramer. The cofactor is heme.

It carries out the reaction L-tryptophan + O2 = N-formyl-L-kynurenine. Its pathway is amino-acid degradation; L-tryptophan degradation via kynurenine pathway; L-kynurenine from L-tryptophan: step 1/2. In terms of biological role, heme-dependent dioxygenase that catalyzes the oxidative cleavage of the L-tryptophan (L-Trp) pyrrole ring and converts L-tryptophan to N-formyl-L-kynurenine. Catalyzes the oxidative cleavage of the indole moiety. This Anaeromyxobacter sp. (strain K) protein is Tryptophan 2,3-dioxygenase.